A 201-amino-acid polypeptide reads, in one-letter code: Small ribosomal subunit protein uS4 (201 aa).

The region spanning 91–157 (CRLDNVVYRA…TPFIIAKETI (67 aa)) is the S4 RNA-binding domain.

Belongs to the universal ribosomal protein uS4 family. Part of the 30S ribosomal subunit. Contacts protein S5. The interaction surface between S4 and S5 is involved in control of translational fidelity.

Its function is as follows. One of the primary rRNA binding proteins, it binds directly to 16S rRNA where it nucleates assembly of the body of the 30S subunit. In terms of biological role, with S5 and S12 plays an important role in translational accuracy. The sequence is that of Small ribosomal subunit protein uS4 from Saccharopolyspora erythraea (strain ATCC 11635 / DSM 40517 / JCM 4748 / NBRC 13426 / NCIMB 8594 / NRRL 2338).